The following is a 393-amino-acid chain: NAD(P)H-quinone oxidoreductase subunit H, chloroplastic (393 aa).

Belongs to the complex I 49 kDa subunit family. In terms of assembly, NDH is composed of at least 16 different subunits, 5 of which are encoded in the nucleus.

The protein localises to the plastid. The protein resides in the chloroplast thylakoid membrane. It catalyses the reaction a plastoquinone + NADH + (n+1) H(+)(in) = a plastoquinol + NAD(+) + n H(+)(out). The catalysed reaction is a plastoquinone + NADPH + (n+1) H(+)(in) = a plastoquinol + NADP(+) + n H(+)(out). NDH shuttles electrons from NAD(P)H:plastoquinone, via FMN and iron-sulfur (Fe-S) centers, to quinones in the photosynthetic chain and possibly in a chloroplast respiratory chain. The immediate electron acceptor for the enzyme in this species is believed to be plastoquinone. Couples the redox reaction to proton translocation, and thus conserves the redox energy in a proton gradient. The sequence is that of NAD(P)H-quinone oxidoreductase subunit H, chloroplastic from Ranunculus macranthus (Large buttercup).